Consider the following 154-residue polypeptide: Large ribosomal subunit protein uL13 (154 aa).

It belongs to the universal ribosomal protein uL13 family. Part of the 50S ribosomal subunit.

In terms of biological role, this protein is one of the early assembly proteins of the 50S ribosomal subunit, although it is not seen to bind rRNA by itself. It is important during the early stages of 50S assembly. The chain is Large ribosomal subunit protein uL13 from Brucella melitensis biotype 2 (strain ATCC 23457).